The chain runs to 320 residues: MQTRNAFSWLKKQITRSISVSLMIYILTRTSISSAYPIFAQQGYENPREATGRIVCANCHLANKPVEIEVPQAVLPDTVFEAVVRIPYDMQLKQVLANGKKGGLNVGAVLILPEGFELAPSDRISPEMKEKIGNLSFQSYRPNKKNILVIGPVPGKKYSEITFPILSPDPATKKDVHFLKYPIYVGGNRGRGQIYPDGSKSNNTVYNATAAGIVSKIIRKEKGGYEITITDASEGRQVVDIIPPGPELLVSEGESIKFDQPLTSNPNVGGFGQGDAEIVLQDPLRVQGLLFFLASVILAQIFLVLKKKQFEKVQLAEMNF.

The N-terminal stretch at 1–35 (MQTRNAFSWLKKQITRSISVSLMIYILTRTSISSA) is a signal peptide. Residues Y36, C56, C59, and H60 each coordinate heme. The chain crosses the membrane as a helical span at residues 286–305 (VQGLLFFLASVILAQIFLVL).

The protein belongs to the cytochrome f family. The 4 large subunits of the cytochrome b6-f complex are cytochrome b6, subunit IV (17 kDa polypeptide, petD), cytochrome f and the Rieske protein, while the 4 small subunits are PetG, PetL, PetM and PetN. The complex functions as a dimer. It depends on heme as a cofactor.

The protein localises to the plastid. Its subcellular location is the chloroplast thylakoid membrane. Functionally, component of the cytochrome b6-f complex, which mediates electron transfer between photosystem II (PSII) and photosystem I (PSI), cyclic electron flow around PSI, and state transitions. The polypeptide is Cytochrome f (Atropa belladonna (Belladonna)).